We begin with the raw amino-acid sequence, 140 residues long: uncharacterized protein (140 aa).

Residue Asn-86 is glycosylated (N-linked (GlcNAc...) asparagine; by host). Residues 92–112 form a helical membrane-spanning segment; that stretch reads IFNGLGFILIVIFIYLLLITL.

This sequence belongs to the asfivirus B117L family.

The protein resides in the host membrane. The protein localises to the virion. This is an uncharacterized protein from African swine fever virus (isolate Pig/Kenya/KEN-50/1950) (ASFV).